A 532-amino-acid chain; its full sequence is Developmental and secondary metabolism regulator ve1 (532 aa).

The Velvet domain occupies 26–220 (NRSLWYQLTV…ADQGCRVRIR (195 aa)). The Nuclear localization signal motif lies at 40 to 45 (ERARAC). The segment covering 217-229 (VRIRRDVRMRKRD) has biased composition (basic residues). Disordered regions lie at residues 217 to 440 (VRIR…TEPS) and 458 to 520 (PQVD…RADG). Low complexity predominate over residues 233-250 (GGNNNNNNNAGNNAGNNG). Basic and acidic residues-rich tracts occupy residues 251–260 (FERREEDFGR) and 283–294 (SEHRASYSDVSR). Positions 302–317 (YPPPPPPPPSYDPTPS) are enriched in pro residues. Residues 397 to 411 (STSTYVPPSPSVYST) show a composition bias toward low complexity. Residues 435–463 (MNTEPSRGSIKISALVEPMPVIEPQVDPL) are PEST. Positions 481–493 (FAQNTRPLFNGQR) are enriched in polar residues.

Belongs to the velvet family. VeA subfamily. In terms of assembly, component of the heterotrimeric velvet complex composed of laeA, ve1 and velB; Ve1 acting as a bridging protein between laeA and velB. Interacts directly with laeA and velB.

The protein localises to the nucleus. It is found in the cytoplasm. Component of the velvet transcription factor complex that controls sexual/asexual developmental ratio in response to light, promoting sexual development in the darkness while stimulating asexual sporulation under illumination. The velvet complex hat acts as a global regulator for secondary metabolite gene expression. Controls the expression of the aurofusarin and trichothecene gene clusters. Also controls the expression of the deoxynivalenol (DON) gene cluster. Regulates hyphal growth and pigment formation. Acts as a positive regulator of virulence. This chain is Developmental and secondary metabolism regulator ve1, found in Gibberella zeae (strain ATCC MYA-4620 / CBS 123657 / FGSC 9075 / NRRL 31084 / PH-1) (Wheat head blight fungus).